A 379-amino-acid polypeptide reads, in one-letter code: 2-methylcitrate synthase (379 aa).

Residue His-187 participates in substrate binding. Residue His-222 is part of the active site. Residue 264–268 (KVMGF) participates in CoA binding. The active site involves His-270. A substrate-binding site is contributed by Arg-279. Residue Asp-321 is part of the active site. 2 residues coordinate substrate: Arg-346 and Arg-365.

Belongs to the citrate synthase family. In terms of assembly, homodimer.

The enzyme catalyses propanoyl-CoA + oxaloacetate + H2O = (2S,3S)-2-methylcitrate + CoA + H(+). It catalyses the reaction oxaloacetate + acetyl-CoA + H2O = citrate + CoA + H(+). The protein operates within organic acid metabolism; propanoate degradation. It functions in the pathway carbohydrate metabolism; tricarboxylic acid cycle; isocitrate from oxaloacetate: step 1/2. In terms of biological role, involved in the catabolism of short chain fatty acids (SCFA) via the tricarboxylic acid (TCA)(acetyl degradation route) and via the 2-methylcitrate cycle I (propionate degradation route). Catalyzes the Claisen condensation of propionyl-CoA and oxaloacetate (OAA) to yield 2-methylcitrate (2-MC) and CoA. Also catalyzes the condensation of oxaloacetate with acetyl-CoA but with a lower specificity. The polypeptide is 2-methylcitrate synthase (gltA) (Antarctic bacterium DS2-3R).